A 390-amino-acid polypeptide reads, in one-letter code: HIT domain-containing protein DDB_G0272839 (390 aa).

The interval 168 to 201 (DNENEKEKEKEMELDNDNTNTESIPPITSKSTST) is disordered. The segment covering 184–201 (DNTNTESIPPITSKSTST) has biased composition (low complexity). In terms of domain architecture, HIT spans 232 to 343 (YFCNKPESFL…ISNDYNTKYL (112 aa)).

The polypeptide is HIT domain-containing protein DDB_G0272839 (Dictyostelium discoideum (Social amoeba)).